A 294-amino-acid polypeptide reads, in one-letter code: Probable enoyl-CoA hydratase echA12 (294 aa).

The protein belongs to the enoyl-CoA hydratase/isomerase family.

The catalysed reaction is a (3S)-3-hydroxyacyl-CoA = a (2E)-enoyl-CoA + H2O. It carries out the reaction a 4-saturated-(3S)-3-hydroxyacyl-CoA = a (3E)-enoyl-CoA + H2O. Could possibly oxidize fatty acids using specific components. This is Probable enoyl-CoA hydratase echA12 (echA12) from Mycobacterium leprae (strain TN).